Reading from the N-terminus, the 165-residue chain is 6,7-dimethyl-8-ribityllumazine synthase (165 aa).

Residues Trp26, 57–59 (SVE), and 79–81 (VVV) contribute to the 5-amino-6-(D-ribitylamino)uracil site. 84–85 (AT) lines the (2S)-2-hydroxy-3-oxobutyl phosphate pocket. His87 serves as the catalytic Proton donor. His112 provides a ligand contact to 5-amino-6-(D-ribitylamino)uracil. A (2S)-2-hydroxy-3-oxobutyl phosphate-binding site is contributed by Arg126.

This sequence belongs to the DMRL synthase family.

It carries out the reaction (2S)-2-hydroxy-3-oxobutyl phosphate + 5-amino-6-(D-ribitylamino)uracil = 6,7-dimethyl-8-(1-D-ribityl)lumazine + phosphate + 2 H2O + H(+). The protein operates within cofactor biosynthesis; riboflavin biosynthesis; riboflavin from 2-hydroxy-3-oxobutyl phosphate and 5-amino-6-(D-ribitylamino)uracil: step 1/2. Its function is as follows. Catalyzes the formation of 6,7-dimethyl-8-ribityllumazine by condensation of 5-amino-6-(D-ribitylamino)uracil with 3,4-dihydroxy-2-butanone 4-phosphate. This is the penultimate step in the biosynthesis of riboflavin. The sequence is that of 6,7-dimethyl-8-ribityllumazine synthase from Salinispora arenicola (strain CNS-205).